Consider the following 336-residue polypeptide: Ketol-acid reductoisomerase (NADP(+)) (336 aa).

The KARI N-terminal Rossmann domain occupies 1–182; it reads MAVIYYDKDA…GVTRAGVIET (182 aa). NADP(+) contacts are provided by residues 25–28, R48, S51, S53, and 83–86; these read YGSQ and DEHQ. Residue H108 is part of the active site. G134 is an NADP(+) binding site. One can recognise a KARI C-terminal knotted domain in the interval 183-328; sequence TFKEETETDL…KELRKMMPWL (146 aa). Residues D191, E195, E227, and E231 each contribute to the Mg(2+) site. S252 provides a ligand contact to substrate.

The protein belongs to the ketol-acid reductoisomerase family. It depends on Mg(2+) as a cofactor.

It carries out the reaction (2R)-2,3-dihydroxy-3-methylbutanoate + NADP(+) = (2S)-2-acetolactate + NADPH + H(+). The catalysed reaction is (2R,3R)-2,3-dihydroxy-3-methylpentanoate + NADP(+) = (S)-2-ethyl-2-hydroxy-3-oxobutanoate + NADPH + H(+). It participates in amino-acid biosynthesis; L-isoleucine biosynthesis; L-isoleucine from 2-oxobutanoate: step 2/4. It functions in the pathway amino-acid biosynthesis; L-valine biosynthesis; L-valine from pyruvate: step 2/4. Functionally, involved in the biosynthesis of branched-chain amino acids (BCAA). Catalyzes an alkyl-migration followed by a ketol-acid reduction of (S)-2-acetolactate (S2AL) to yield (R)-2,3-dihydroxy-isovalerate. In the isomerase reaction, S2AL is rearranged via a Mg-dependent methyl migration to produce 3-hydroxy-3-methyl-2-ketobutyrate (HMKB). In the reductase reaction, this 2-ketoacid undergoes a metal-dependent reduction by NADPH to yield (R)-2,3-dihydroxy-isovalerate. This is Ketol-acid reductoisomerase (NADP(+)) from Thermotoga maritima (strain ATCC 43589 / DSM 3109 / JCM 10099 / NBRC 100826 / MSB8).